Consider the following 367-residue polypeptide: MALSSESSAASAARRPSGGPATSWRQVLARLTGGDDLARGQAAWAMDQIMTGEASPAQIAAFAVAMQVKVPTSAEVIELAEVMLNHALPFPAGAIRDDTVDIVGTGGDGVNTLNLSTMAAIVAAAAGVPVVKHGNRAASSLSGGADTLEELGVRIDLGPEQVARSVAEVGIGFCFAPLFHPSYRHTSAVRREIGVPTVFNLLGPLTNPARPRAGLIGCAFAELAEVMAGVFAARRSSVLVVHGDDGLDELTTTTTSTIWRVQAGTVDRLTFDPAGFGFPRAELDDLLGGDAQTNAAEVRAVLAGGQGPVRDAVVLNAAGAIVAHAGLSSRAEWLPAWEDGLARASAAIDSGAAEQLLARWVRFGQQL.

Positions 1–21 (MALSSESSAASAARRPSGGPA) are enriched in low complexity. Positions 1–24 (MALSSESSAASAARRPSGGPATSW) are disordered. Residues G104, 107–108 (GD), T112, 114–117 (NLST), 132–140 (KHGNRAASS), and G144 each bind 5-phospho-alpha-D-ribose 1-diphosphate. G104 lines the anthranilate pocket. Residue S116 participates in Mg(2+) binding. Residue N135 coordinates anthranilate. R190 serves as a coordination point for anthranilate. Mg(2+) is bound by residues D248 and E249.

This sequence belongs to the anthranilate phosphoribosyltransferase family. As to quaternary structure, homodimer. The cofactor is Mg(2+).

The catalysed reaction is N-(5-phospho-beta-D-ribosyl)anthranilate + diphosphate = 5-phospho-alpha-D-ribose 1-diphosphate + anthranilate. Its pathway is amino-acid biosynthesis; L-tryptophan biosynthesis; L-tryptophan from chorismate: step 2/5. Functionally, catalyzes the transfer of the phosphoribosyl group of 5-phosphorylribose-1-pyrophosphate (PRPP) to anthranilate to yield N-(5'-phosphoribosyl)-anthranilate (PRA). This is Anthranilate phosphoribosyltransferase from Mycolicibacterium paratuberculosis (strain ATCC BAA-968 / K-10) (Mycobacterium paratuberculosis).